We begin with the raw amino-acid sequence, 158 residues long: Small ribosomal subunit protein uS17 (158 aa).

The residue at position 2 (Ala-2) is an N-acetylalanine. Citrulline is present on Arg-22. N6-acetyllysine is present on residues Lys-38, Lys-45, and Lys-58. Cys-60 is lipidated: S-palmitoyl cysteine. A Phosphoserine modification is found at Ser-67. Arg-69 is modified (omega-N-methylarginine). Ser-110 carries the post-translational modification Phosphoserine.

This sequence belongs to the universal ribosomal protein uS17 family. As to quaternary structure, component of the small ribosomal subunit. Part of the small subunit (SSU) processome, composed of more than 70 proteins and the RNA chaperone small nucleolar RNA (snoRNA) U3. Post-translationally, citrullinated by PADI4.

It localises to the cytoplasm. It is found in the nucleus. Its subcellular location is the nucleolus. In terms of biological role, component of the small ribosomal subunit. The ribosome is a large ribonucleoprotein complex responsible for the synthesis of proteins in the cell. Part of the small subunit (SSU) processome, first precursor of the small eukaryotic ribosomal subunit. During the assembly of the SSU processome in the nucleolus, many ribosome biogenesis factors, an RNA chaperone and ribosomal proteins associate with the nascent pre-rRNA and work in concert to generate RNA folding, modifications, rearrangements and cleavage as well as targeted degradation of pre-ribosomal RNA by the RNA exosome. The protein is Small ribosomal subunit protein uS17 (Rps11) of Mus musculus (Mouse).